The chain runs to 751 residues: Photosystem I P700 chlorophyll a apoprotein A1 (751 aa).

A run of 8 helical transmembrane segments spans residues 73 to 96, 159 to 182, 198 to 222, 294 to 312, 349 to 372, 388 to 414, 435 to 457, and 532 to 550; these read IFSA…FHGA, LYCT…FHYH, MNHH…HLSL, TAHH…GHMY, WHAQ…HHMY, LSLF…IFMV, AIVS…LYIH, and FLVH…LILV. [4Fe-4S] cluster-binding residues include C574 and C583. 2 helical membrane passes run 590–611 and 665–687; these read HVFL…HFSW and LSAY…MFLF. H676 serves as a coordination point for chlorophyll a'. Chlorophyll a-binding residues include M684 and Y692. Phylloquinone is bound at residue W693. A helical transmembrane segment spans residues 725–745; it reads AVGVAHYLLGGIGTTWAFFLA.

It belongs to the PsaA/PsaB family. As to quaternary structure, the PsaA/B heterodimer binds the P700 chlorophyll special pair and subsequent electron acceptors. PSI consists of a core antenna complex that captures photons, and an electron transfer chain that converts photonic excitation into a charge separation. The eukaryotic PSI reaction center is composed of at least 11 subunits. Requires P700 is a chlorophyll a/chlorophyll a' dimer, A0 is one or more chlorophyll a, A1 is one or both phylloquinones and FX is a shared 4Fe-4S iron-sulfur center. as cofactor.

It localises to the plastid. The protein localises to the chloroplast thylakoid membrane. The catalysed reaction is reduced [plastocyanin] + hnu + oxidized [2Fe-2S]-[ferredoxin] = oxidized [plastocyanin] + reduced [2Fe-2S]-[ferredoxin]. In terms of biological role, psaA and PsaB bind P700, the primary electron donor of photosystem I (PSI), as well as the electron acceptors A0, A1 and FX. PSI is a plastocyanin/cytochrome c6-ferredoxin oxidoreductase, converting photonic excitation into a charge separation, which transfers an electron from the donor P700 chlorophyll pair to the spectroscopically characterized acceptors A0, A1, FX, FA and FB in turn. Oxidized P700 is reduced on the lumenal side of the thylakoid membrane by plastocyanin or cytochrome c6. This Pyropia yezoensis (Susabi-nori) protein is Photosystem I P700 chlorophyll a apoprotein A1.